The primary structure comprises 861 residues: Bifunctional uridylyltransferase/uridylyl-removing enzyme (861 aa).

Residues 1–322 are uridylyltransferase; it reads MHTAAAATPA…FPTELGITRT (322 aa). The segment at 323 to 679 is uridylyl-removing; sequence INGRFVERQG…ARISPVGEGL (357 aa). Residues 441–557 enclose the HD domain; that stretch reads VDQHILMVVR…RHFADQVGSE (117 aa). 2 consecutive ACT domains span residues 680–763 and 792–861; these read QVAV…AEPP and LLSL…ALAI.

Belongs to the GlnD family. Requires Mg(2+) as cofactor.

The catalysed reaction is [protein-PII]-L-tyrosine + UTP = [protein-PII]-uridylyl-L-tyrosine + diphosphate. It carries out the reaction [protein-PII]-uridylyl-L-tyrosine + H2O = [protein-PII]-L-tyrosine + UMP + H(+). Uridylyltransferase (UTase) activity is inhibited by glutamine, while glutamine activates uridylyl-removing (UR) activity. Its function is as follows. Modifies, by uridylylation and deuridylylation, the PII regulatory proteins (GlnB and homologs), in response to the nitrogen status of the cell that GlnD senses through the glutamine level. Under low glutamine levels, catalyzes the conversion of the PII proteins and UTP to PII-UMP and PPi, while under higher glutamine levels, GlnD hydrolyzes PII-UMP to PII and UMP (deuridylylation). Thus, controls uridylylation state and activity of the PII proteins, and plays an important role in the regulation of nitrogen assimilation and metabolism. The sequence is that of Bifunctional uridylyltransferase/uridylyl-removing enzyme from Ralstonia nicotianae (strain ATCC BAA-1114 / GMI1000) (Ralstonia solanacearum).